The sequence spans 195 residues: MRQQQAGGVGDGVSPGNVPVCYYGPGGRVPSSLERRARAAEVLLRCAACGLAVLAAALLGADRQTRVFFSIQKVARYTDMQSLVLLVIANGMAACYSLIQCARCLVMAYIVISAVAAAMEAALIGKYGQPEFQWMKTCHLYKRFCAQAGGGVACAIAASVNMVGVALISAFNLFRLYGNSNGGGKATTTTMAGGK.

At 1–38 (MRQQQAGGVGDGVSPGNVPVCYYGPGGRVPSSLERRAR) the chain is on the cytoplasmic side. A helical membrane pass occupies residues 39–59 (AAEVLLRCAACGLAVLAAALL). At 60-81 (GADRQTRVFFSIQKVARYTDMQ) the chain is on the extracellular side. A helical transmembrane segment spans residues 82–102 (SLVLLVIANGMAACYSLIQCA). Topologically, residues 103-104 (RC) are cytoplasmic. The helical transmembrane segment at 105–125 (LVMAYIVISAVAAAMEAALIG) threads the bilayer. At 126–150 (KYGQPEFQWMKTCHLYKRFCAQAGG) the chain is on the extracellular side. The helical transmembrane segment at 151–171 (GVACAIAASVNMVGVALISAF) threads the bilayer. The Cytoplasmic segment spans residues 172–195 (NLFRLYGNSNGGGKATTTTMAGGK).

The protein belongs to the Casparian strip membrane proteins (CASP) family. Homodimer and heterodimers.

It is found in the cell membrane. The sequence is that of CASP-like protein Os03g0196400 from Oryza sativa subsp. japonica (Rice).